The following is a 252-amino-acid chain: Imidazole glycerol phosphate synthase subunit HisF (252 aa).

Active-site residues include Asp-11 and Asp-130.

Belongs to the HisA/HisF family. As to quaternary structure, heterodimer of HisH and HisF.

The protein resides in the cytoplasm. It carries out the reaction 5-[(5-phospho-1-deoxy-D-ribulos-1-ylimino)methylamino]-1-(5-phospho-beta-D-ribosyl)imidazole-4-carboxamide + L-glutamine = D-erythro-1-(imidazol-4-yl)glycerol 3-phosphate + 5-amino-1-(5-phospho-beta-D-ribosyl)imidazole-4-carboxamide + L-glutamate + H(+). Its pathway is amino-acid biosynthesis; L-histidine biosynthesis; L-histidine from 5-phospho-alpha-D-ribose 1-diphosphate: step 5/9. In terms of biological role, IGPS catalyzes the conversion of PRFAR and glutamine to IGP, AICAR and glutamate. The HisF subunit catalyzes the cyclization activity that produces IGP and AICAR from PRFAR using the ammonia provided by the HisH subunit. This is Imidazole glycerol phosphate synthase subunit HisF from Bacillus cereus (strain Q1).